Consider the following 1483-residue polypeptide: Mediator of RNA polymerase II transcription subunit 26 (1483 aa).

Residues 8–85 (ELTTHLSQAL…KKWREMVGIQ (78 aa)) form the TFIIS N-terminal domain. Residues Ser204, Ser258, and Ser421 each carry the phosphoserine modification. Disordered regions lie at residues 227 to 278 (SDSD…GQVA), 414 to 438 (HEYL…SKGV), 480 to 518 (VSMQ…SMNS), 541 to 575 (TDSD…SIQS), and 989 to 1041 (DKSS…MKRR). Over residues 426-435 (PKRRGRKKGS) the composition is skewed to basic residues. Low complexity predominate over residues 480–495 (VSMQSSASNLSNSSTN). A compositionally biased stretch (polar residues) spans 496–518 (RDLPSHTTFPRQTSSCSDTSMNS). Thr541 is modified (phosphothreonine). Over residues 550–564 (PSHDSNKSQEIKECT) the composition is skewed to basic and acidic residues. Ser551 bears the Phosphoserine mark. Polar residues-rich tracts occupy residues 565-575 (SLDSNSNSIQS) and 989-999 (DKSSNTGCQGN). Positions 1000–1011 (SPYSSSSSSSYS) are enriched in low complexity. The span at 1020–1033 (ITKNLQNKNIQLNS) shows a compositional bias: polar residues. Ser1177 is modified (phosphoserine). At Thr1179 the chain carries Phosphothreonine.

It belongs to the Mediator complex subunit 26 family. As to quaternary structure, component of the Mediator complex. Interacts with MED6 and MED17.

It localises to the nucleus. Functionally, component of the Mediator complex, a coactivator involved in the regulated transcription of nearly all RNA polymerase II-dependent genes. Mediator functions as a bridge to convey information from gene-specific regulatory proteins to the basal RNA polymerase II transcription machinery. Mediator is recruited to promoters by direct interactions with regulatory proteins and serves as a scaffold for the assembly of a functional preinitiation complex with RNA polymerase II and the general transcription factors. Required for activated transcription of the MtnA gene. The sequence is that of Mediator of RNA polymerase II transcription subunit 26 (MED26) from Drosophila melanogaster (Fruit fly).